We begin with the raw amino-acid sequence, 232 residues long: MVQTKRQKAIDIAVVPGKAYGIDEAIKILKTATKAKFIESVDVAIRLGVDVKKSDQQVRGSTLLPAGTGRDVRVAVFVPSGAKAEDALAAGADAVGMDDLAEKMQAGDLNYDVVIATPDAMRVVGKLGTLLGPRGLMPNPKVGTVSQNPGEAVKNAKSGQVRYRADKAGIIHCVIGKVNFDDEALKLNLQALLVDLIKIKPTASKGTYLQKVSLSSTMGPGVMIDQSTLSLK.

It belongs to the universal ribosomal protein uL1 family. Part of the 50S ribosomal subunit.

Binds directly to 23S rRNA. The L1 stalk is quite mobile in the ribosome, and is involved in E site tRNA release. Its function is as follows. Protein L1 is also a translational repressor protein, it controls the translation of the L11 operon by binding to its mRNA. The chain is Large ribosomal subunit protein uL1 from Xylella fastidiosa (strain M23).